The primary structure comprises 151 residues: Protein SprT-like (151 aa).

The SprT-like domain occupies 6 to 147 (LQRMVENLSE…GHCNGKLRMK (142 aa)). Zn(2+) is bound at residue His-67. The active site involves Glu-68. His-71 contributes to the Zn(2+) binding site.

It belongs to the SprT family. Zn(2+) serves as cofactor.

It localises to the cytoplasm. This Staphylococcus aureus (strain MRSA252) protein is Protein SprT-like.